Consider the following 53-residue polypeptide: Small, acid-soluble spore protein K (53 aa).

Positions 1 to 53 (MRNKAHNFPNQNNNKLEGEPRAKAEYASKRADGTTNTHPQERMRASGERSDFF) are disordered. Basic and acidic residues-rich tracts occupy residues 16–32 (LEGEPRAKAEYASKRAD) and 39–53 (PQERMRASGERSDFF).

It belongs to the SspK family.

The protein localises to the spore core. The sequence is that of Small, acid-soluble spore protein K from Geobacillus kaustophilus (strain HTA426).